Consider the following 72-residue polypeptide: Translation initiation factor IF-1 (72 aa).

An S1-like domain is found at 1-72 (MSKDDCIEFE…TKGRIIYRMK (72 aa)).

Belongs to the IF-1 family. In terms of assembly, component of the 30S ribosomal translation pre-initiation complex which assembles on the 30S ribosome in the order IF-2 and IF-3, IF-1 and N-formylmethionyl-tRNA(fMet); mRNA recruitment can occur at any time during PIC assembly.

Its subcellular location is the cytoplasm. Its function is as follows. One of the essential components for the initiation of protein synthesis. Stabilizes the binding of IF-2 and IF-3 on the 30S subunit to which N-formylmethionyl-tRNA(fMet) subsequently binds. Helps modulate mRNA selection, yielding the 30S pre-initiation complex (PIC). Upon addition of the 50S ribosomal subunit IF-1, IF-2 and IF-3 are released leaving the mature 70S translation initiation complex. The sequence is that of Translation initiation factor IF-1 from Xylella fastidiosa (strain 9a5c).